A 274-amino-acid polypeptide reads, in one-letter code: GPN-loop GTPase 3 (274 aa).

13 to 18 (GVGKST) lines the GTP pocket. The Gly-Pro-Asn (GPN)-loop; involved in dimer interface signature appears at 70–72 (GPN). Residue 173 to 176 (SKID) coordinates GTP. A disordered region spans residues 255–274 (SESQEPKEPVEEIEEEVDFE). Positions 265 to 274 (EEIEEEVDFE) are enriched in acidic residues.

This sequence belongs to the GPN-loop GTPase family. In terms of assembly, heterodimers with GPN1 or GPN2. Binds to RNA polymerase II (RNAPII).

Its function is as follows. Small GTPase required for proper nuclear import of RNA polymerase II and III (RNAPII and RNAPIII). May act at an RNAP assembly step prior to nuclear import. The polypeptide is GPN-loop GTPase 3 (Debaryomyces hansenii (strain ATCC 36239 / CBS 767 / BCRC 21394 / JCM 1990 / NBRC 0083 / IGC 2968) (Yeast)).